Here is a 206-residue protein sequence, read N- to C-terminus: Imidazoleglycerol-phosphate dehydratase (206 aa).

Residues 1 to 24 (MDPTASGRQAPRNPRQATVQRETK) form a disordered region.

This sequence belongs to the imidazoleglycerol-phosphate dehydratase family.

The protein localises to the cytoplasm. It catalyses the reaction D-erythro-1-(imidazol-4-yl)glycerol 3-phosphate = 3-(imidazol-4-yl)-2-oxopropyl phosphate + H2O. Its pathway is amino-acid biosynthesis; L-histidine biosynthesis; L-histidine from 5-phospho-alpha-D-ribose 1-diphosphate: step 6/9. In Acidothermus cellulolyticus (strain ATCC 43068 / DSM 8971 / 11B), this protein is Imidazoleglycerol-phosphate dehydratase.